The primary structure comprises 540 residues: Chaperonin GroEL 2 (540 aa).

Residues 30 to 33 (TLGP), Lys51, 87 to 91 (DGTTT), Gly415, 479 to 481 (NAA), and Asp495 each bind ATP.

It belongs to the chaperonin (HSP60) family. In terms of assembly, forms a cylinder of 14 subunits composed of two heptameric rings stacked back-to-back. Interacts with the co-chaperonin GroES.

It localises to the cytoplasm. It carries out the reaction ATP + H2O + a folded polypeptide = ADP + phosphate + an unfolded polypeptide.. Its function is as follows. Together with its co-chaperonin GroES, plays an essential role in assisting protein folding. The GroEL-GroES system forms a nano-cage that allows encapsulation of the non-native substrate proteins and provides a physical environment optimized to promote and accelerate protein folding. The chain is Chaperonin GroEL 2 from Burkholderia vietnamiensis (strain G4 / LMG 22486) (Burkholderia cepacia (strain R1808)).